Consider the following 128-residue polypeptide: V-type proton ATPase subunit F (128 aa).

The protein belongs to the V-ATPase F subunit family. As to quaternary structure, V-ATPase is a heteromultimeric enzyme composed of a peripheral catalytic V1 complex (components A to H) attached to an integral membrane V0 proton pore complex (components: a, c, c'', d and e).

The protein resides in the vacuole membrane. Subunit of the peripheral V1 complex of vacuolar ATPase essential for assembly or catalytic function. V-ATPase is responsible for acidifying a variety of intracellular compartments in eukaryotic cells. This is V-type proton ATPase subunit F (VHA-F) from Arabidopsis thaliana (Mouse-ear cress).